The primary structure comprises 525 residues: GMP synthase [glutamine-hydrolyzing] (525 aa).

Residues 8-207 enclose the Glutamine amidotransferase type-1 domain; that stretch reads KILILDFGSQ…ALDICGCAAN (200 aa). The active-site Nucleophile is cysteine 85. Catalysis depends on residues histidine 181 and glutamate 183. The GMPS ATP-PPase domain occupies 208 to 400; sequence WKPSSIIEDA…LGLPYNMLYR (193 aa). 235–241 lines the ATP pocket; it reads SGGVDSS.

As to quaternary structure, homodimer.

The catalysed reaction is XMP + L-glutamine + ATP + H2O = GMP + L-glutamate + AMP + diphosphate + 2 H(+). The protein operates within purine metabolism; GMP biosynthesis; GMP from XMP (L-Gln route): step 1/1. Functionally, catalyzes the synthesis of GMP from XMP. This chain is GMP synthase [glutamine-hydrolyzing], found in Shewanella putrefaciens (strain CN-32 / ATCC BAA-453).